The chain runs to 471 residues: Tryptophanase (471 aa).

The residue at position 256 (Lys-256) is an N6-(pyridoxal phosphate)lysine.

Belongs to the beta-eliminating lyase family. Homotetramer. Requires pyridoxal 5'-phosphate as cofactor.

The enzyme catalyses L-tryptophan + H2O = indole + pyruvate + NH4(+). It participates in amino-acid degradation; L-tryptophan degradation via pyruvate pathway; indole and pyruvate from L-tryptophan: step 1/1. The polypeptide is Tryptophanase (Salinibacter ruber (strain DSM 13855 / M31)).